Reading from the N-terminus, the 368-residue chain is D-alanine--D-alanine ligase (368 aa).

The 208-residue stretch at 151–358 folds into the ATP-grasp domain; the sequence is KKLLAAEGLP…YRTLISTLVD (208 aa). Position 179–234 (179–234) interacts with ATP; the sequence is KAELGLPVFVKPARGGSSIGITRVSNWDGLDGAIAHARLHDPKVIVEGAIIGREVE. Asp-313, Glu-325, and Asn-327 together coordinate Mg(2+).

Belongs to the D-alanine--D-alanine ligase family. Mg(2+) serves as cofactor. Mn(2+) is required as a cofactor.

It is found in the cytoplasm. It catalyses the reaction 2 D-alanine + ATP = D-alanyl-D-alanine + ADP + phosphate + H(+). The protein operates within cell wall biogenesis; peptidoglycan biosynthesis. In terms of biological role, cell wall formation. The protein is D-alanine--D-alanine ligase of Rhodococcus erythropolis (strain PR4 / NBRC 100887).